The sequence spans 119 residues: Large ribosomal subunit protein bL19 (119 aa).

It belongs to the bacterial ribosomal protein bL19 family.

Its function is as follows. This protein is located at the 30S-50S ribosomal subunit interface and may play a role in the structure and function of the aminoacyl-tRNA binding site. In Borreliella afzelii (strain PKo) (Borrelia afzelii), this protein is Large ribosomal subunit protein bL19.